We begin with the raw amino-acid sequence, 65 residues long: Light-harvesting protein B800/830/1020 beta-2 chain (65 aa).

At 1–17 (TDIRTGLTDEECQEIHE) the chain is on the cytoplasmic side. Positions 16 and 34 each coordinate a bacteriochlorophyll. A helical membrane pass occupies residues 18–40 (MNMLGMHAYWSIGLIANALAYAW). Topologically, residues 41-65 (RPFHQGRAGNRLEDHAPDYVRSALT) are periplasmic.

This sequence belongs to the antenna complex beta subunit family. In terms of assembly, the core complex is formed by different alpha and beta chains, binding bacteriochlorophyll molecules, and arranged most probably in tetrameric structures disposed around the reaction center. The non-pigmented gamma chains may constitute additional components.

Its subcellular location is the cell inner membrane. In terms of biological role, antenna complexes are light-harvesting systems, which transfer the excitation energy to the reaction centers. This chain is Light-harvesting protein B800/830/1020 beta-2 chain, found in Halorhodospira halochloris (Ectothiorhodospira halochloris).